Here is a 245-residue protein sequence, read N- to C-terminus: Orotidine 5'-phosphate decarboxylase (245 aa).

Substrate-binding positions include Asp22, Lys44, 71 to 80, Thr131, Arg192, Gln201, Gly221, and Arg222; that span reads DLKFHDIPNT. Residue Lys73 is the Proton donor of the active site.

The protein belongs to the OMP decarboxylase family. Type 1 subfamily. In terms of assembly, homodimer.

The catalysed reaction is orotidine 5'-phosphate + H(+) = UMP + CO2. Its pathway is pyrimidine metabolism; UMP biosynthesis via de novo pathway; UMP from orotate: step 2/2. Its function is as follows. Catalyzes the decarboxylation of orotidine 5'-monophosphate (OMP) to uridine 5'-monophosphate (UMP). In Yersinia pestis bv. Antiqua (strain Antiqua), this protein is Orotidine 5'-phosphate decarboxylase.